We begin with the raw amino-acid sequence, 674 residues long: E3 ubiquitin ligase Rnf157 (674 aa).

An RING-type zinc finger spans residues 277 to 316 (CVVCLSDVRDTLILPCRHLCLCNACADTLRYQASNCPICR). 2 disordered regions span residues 376–404 (LTPSPSAPPLRALGEARRPGGLPSYGSDI) and 433–610 (QNSS…TGRE). Polar residues predominate over residues 469–508 (TPESENLTLSSSGAIDQSSCTGTPLSPTISSPEDPLSSSL). A compositionally biased stretch (low complexity) spans 509–526 (AQSIMSMASSHSQQSQLS). The span at 527 to 537 (TDTVSSMSGSY) shows a compositional bias: polar residues. The segment covering 583 to 604 (EEMDAEGNVTEEEFASPEEDDG) has biased composition (acidic residues).

It localises to the cytoplasm. It catalyses the reaction S-ubiquitinyl-[E2 ubiquitin-conjugating enzyme]-L-cysteine + [acceptor protein]-L-lysine = [E2 ubiquitin-conjugating enzyme]-L-cysteine + N(6)-ubiquitinyl-[acceptor protein]-L-lysine.. E3 ubiquitin ligase that ubiquitinates apbb1 for its degradation by the proteasome and thus prevents apoptosis and promotes survival of neurons. Has a dual role in neurons as it is also required for dendrite growth and maintenance for which its ligase activity is not critical. May act as a scaffold molecule to regulate this process. Acts as a downstream effector of the interconnected PI3K and MAPK signaling pathways and thus participates in the regulation of the cell cycle. The polypeptide is E3 ubiquitin ligase Rnf157 (rnf157) (Xenopus laevis (African clawed frog)).